Consider the following 458-residue polypeptide: Argininosuccinate lyase (458 aa).

This sequence belongs to the lyase 1 family. Argininosuccinate lyase subfamily.

Its subcellular location is the cytoplasm. The catalysed reaction is 2-(N(omega)-L-arginino)succinate = fumarate + L-arginine. It participates in amino-acid biosynthesis; L-arginine biosynthesis; L-arginine from L-ornithine and carbamoyl phosphate: step 3/3. The sequence is that of Argininosuccinate lyase from Neisseria gonorrhoeae (strain ATCC 700825 / FA 1090).